We begin with the raw amino-acid sequence, 326 residues long: Microtubule-associated protein RP/EB family member 2 (326 aa).

The residue at position 9 (serine 9) is a Phosphoserine. A Calponin-homology (CH) domain is found at 56 to 158; that stretch reads TMSRHDIIAW…FIQWFKKFYD (103 aa). Tyrosine 166 carries the post-translational modification Phosphotyrosine. Disordered regions lie at residues 170–239 and 297–326; these read EARQ…DKDL and YASDEQEGQTEEPEVEEQTHDQQPQQQEEY. The segment at 186-326 is DCTN1-binding; sequence QIFNLPKKSH…DQQPQQQEEY (141 aa). Residues 199–233 show a composition bias toward low complexity; the sequence is SPTAGAAKSSPAAKPGSTPSRPSSAKRASSSGSAS. A phosphoserine mark is found at serine 218 and serine 235. Positions 235–305 constitute an EB1 C-terminal domain; it reads SDKDLETQVI…LYASDEQEGQ (71 aa). Residues 258 to 301 form an APC-binding region; it reads EGVEKERDFYFGKLREIELLCQEHGQENDDLVQRLMEVLYASDE. Positions 300-312 are enriched in acidic residues; that stretch reads DEQEGQTEEPEVE. Over residues 317–326 the composition is skewed to low complexity; that stretch reads DQQPQQQEEY.

Belongs to the MAPRE family. In terms of assembly, interacts with DCTN1. Interacts with APC (via C-terminal). Interacts with monomeric and polymerized tubulin. Interacts with SLAIN1. Interacts (via the N-terminal region) with BAG1. Interacts with ASB14. Interacts with HAX1; this interaction is essential for epidermal cell migration. Phosphorylated at Ser-235 by CK2 leading to enhanced cell adhesion. Phosphorylated by CDK1 and AURKB during mitosis reduces the binding affinity of MAPRE2 for microtubules. In terms of processing, ubiquitinated in an ASB14-dependent manner; leading to proteasomal degradation.

Its subcellular location is the cytoplasm. The protein localises to the cytoskeleton. Adapter protein that is involved in microtubule polymerization, and spindle function by stabilizing microtubules and anchoring them at centrosomes. Therefore, ensures mitotic progression and genome stability. Acts as a central regulator of microtubule reorganization in apico-basal epithelial differentiation. Plays a role during oocyte meiosis by regulating microtubule dynamics. Participates in neurite growth by interacting with plexin B3/PLXNB3 and microtubule reorganization during apico-basal epithelial differentiation. Also plays an essential role for cell migration and focal adhesion dynamics. Mechanistically, recruits HAX1 to microtubules in order to regulate focal adhesion dynamics. The protein is Microtubule-associated protein RP/EB family member 2 (Mapre2) of Rattus norvegicus (Rat).